The following is a 79-amino-acid chain: D-alanyl carrier protein (79 aa).

A Carrier domain is found at 1–77 (MSIEETVIEL…KIVQGVEELQ (77 aa)). Residue Ser-35 is modified to O-(pantetheine 4'-phosphoryl)serine.

This sequence belongs to the DltC family. 4'-phosphopantetheine is transferred from CoA to a specific serine of apo-DCP.

It localises to the cytoplasm. Its pathway is cell wall biogenesis; lipoteichoic acid biosynthesis. Its function is as follows. Carrier protein involved in the D-alanylation of lipoteichoic acid (LTA). The loading of thioester-linked D-alanine onto DltC is catalyzed by D-alanine--D-alanyl carrier protein ligase DltA. The DltC-carried D-alanyl group is further transferred to cell membrane phosphatidylglycerol (PG) by forming an ester bond, probably catalyzed by DltD. D-alanylation of LTA plays an important role in modulating the properties of the cell wall in Gram-positive bacteria, influencing the net charge of the cell wall. The sequence is that of D-alanyl carrier protein from Streptococcus pyogenes serotype M1.